A 1759-amino-acid chain; its full sequence is MIFESFILENLVFLCMKIMNSIVVVGLYYGFMTTFSIGPSYLFLLRARLVEEGTENKISATTGFITGQLIIFMSIYYAPLHLALGRPHTITVIAIPYLLFQFFGNSKKNFLNYGYKNPNSIRNFSIQRIFFQNLLFQFFNPLFLPSSIFMRFVNIYLFRCNNKVLFLTSSFIGWIIGHTFFMKWIEFLLICIQQNNLIKSNVRIQSNKYILSELKNSMFQIFVVFLFVTCLYYLGRIPPPFFSKKLLEIKESNEFFKKEKKGDVETNLQRIRTKQKRSNNKDIFPSIFLKKEKNLYKLDEQKNKLQKPLLNILFNYKRWNRPFRYIKNNQFENIIKNEISEFFFHTYPRNGREKIYFTYPQNLSTFQKMMETKIDIFTIKKISYDDSSNHSSYSNEEKRKKLSNEFITRTKLIDKELISLDIFENRIRLCNDETKKNYFTKITDPFLNGPFRGRIKKGFSTSIQDEKTYKKNHILINKIQEIFLYNSKKIPKKNNRNYQKLEENLKTFNKKLLVTTFLFNLISQFSKKSVSSFNYEVLYLFPEHEQVKMNSNLEEEKKLIIKILFDAITTDLNEKTKGNRNNTKSIKINEICKKVPRWSYKFMDELEELGGKMEADNSQIRSRKAKRVVILTNKSKFFKKYNTYNDLGDTENTENTEKKNELALRRYSQQSDFRRDIIKGSIRAQRRKTVTWKFFQKRVHSPLFLDKIEKSLFFSFDTFKSMKIFLKLKIWIRKKTEFKILGYIEEKTKKSPKKEEEKKKGNEERKRIEIAEAWDSIIFAQVIRGVLLITQCIIRKYILLPSLIIIKNMIRILFFQIPEWSEDYRDWKRERYIKCTYNGVQLSEREFPQKWLTDGIQIKIVFPFHLKPWHKYKIRCNKKKKDSKKKKNFCFLTVWGMEVELPFSSSPKNLFSFFDPILKELKKKTKQFEFFTFRVLKVFSEKFKLFLNIVIEKAKWIINRIMESLKKSIVFLTKKRKEFFESLFIQWKPKKLDELSENKIDEATISIQSIKSTNFALKKKKIKDLNTKRKVVIKKIKKLKKEEKKRGLVISETNIDSNKTISDSKRIEFEKKNLQILKRIHIRLTKKSHSFLKFFIKKIYLDIFLYIICIPKIHIQPFIESTKKFLNKWIYGNETNAERTYKTNQSIIPFISKLHKYFHNRNLNSHNYFDVSFLSQAYVFFNLLQTRIININIYKLRLLFEYHKNFFFVKNKIKNSFFGAQGIVHSKLEQKNLLNSKRNQWTNWLKNHYYQYDLSNSRWSKLLSQKWRNRITKFGVAQNPNLTKWDSYGKSPLIIYKEQQGAALKKKIRKQYRYDLLSYNFMNYANKKDSYIYGYRSLFQSNKNIWISSNYNTYKKNLFDRISNIFIKNYEDAIIIDIEKNSNRKYLDWMGIHREILNRSISNPEFWFFSKFVIFYNAYRSNSQIIPIKLLYLHSKVSKVNKNVSEKNITRKKKRIAVFRASKKQEDIEKNSVAVGRGSEKNSYVIKKKKVKNNMEVELHFLVRNFLIFHFNWKNFLGQNIFHNVKVYCLLIRLTNLRKMTIASIQRGELGLDIMIIQNQKNLTLPGLSKNKNNKLRKKELFVIEPVRLSRKNNKQFLKSKTMDLSLIHKNKRKIDKKYLKKIHVNKKSFYKYITRTRDQKITEKNEKEILNFLVPENILSARRRRELRMRICLYPNNRNSIHRNTIFDNENKVKKGFQVLTKKRNEKEKKKLMNFKIFLWPKYRLEDLACINRYWFNTHNGSRFSIVRIHLYPRVKIC.

Transmembrane regions (helical) follow at residues 23–45 (VVVGLYYGFMTTFSIGPSYLFLL), 64–84 (FITGQLIIFMSIYYAPLHLAL), 129–149 (IFFQNLLFQFFNPLFLPSSIF), 172–192 (IGWIIGHTFFMKWIEFLLICI), and 221–241 (IFVVFLFVTCLYYLGRIPPPF).

It belongs to the TIC214 family. In terms of assembly, part of the Tic complex.

The protein localises to the plastid. The protein resides in the chloroplast inner membrane. Involved in protein precursor import into chloroplasts. May be part of an intermediate translocation complex acting as a protein-conducting channel at the inner envelope. This is Protein TIC 214 from Phaseolus vulgaris (Kidney bean).